Reading from the N-terminus, the 214-residue chain is Probable septum site-determining protein MinC (214 aa).

This sequence belongs to the MinC family. As to quaternary structure, interacts with MinD and FtsZ.

Cell division inhibitor that blocks the formation of polar Z ring septums. Rapidly oscillates between the poles of the cell to destabilize FtsZ filaments that have formed before they mature into polar Z rings. Prevents FtsZ polymerization. The polypeptide is Probable septum site-determining protein MinC (Caldanaerobacter subterraneus subsp. tengcongensis (strain DSM 15242 / JCM 11007 / NBRC 100824 / MB4) (Thermoanaerobacter tengcongensis)).